A 413-amino-acid polypeptide reads, in one-letter code: Acetate kinase (413 aa).

Asn-7 serves as a coordination point for Mg(2+). Lys-14 contributes to the ATP binding site. A substrate-binding site is contributed by Arg-98. The active-site Proton donor/acceptor is Asp-157. Residues 216-220, 291-293, and 339-343 contribute to the ATP site; these read HIGNG, DLR, and GVGEN. Glu-392 lines the Mg(2+) pocket.

The protein belongs to the acetokinase family. In terms of assembly, homodimer. The cofactor is Mg(2+). It depends on Mn(2+) as a cofactor.

It localises to the cytoplasm. The enzyme catalyses acetate + ATP = acetyl phosphate + ADP. It functions in the pathway metabolic intermediate biosynthesis; acetyl-CoA biosynthesis; acetyl-CoA from acetate: step 1/2. In terms of biological role, catalyzes the formation of acetyl phosphate from acetate and ATP. Can also catalyze the reverse reaction. The chain is Acetate kinase from Synechocystis sp. (strain ATCC 27184 / PCC 6803 / Kazusa).